A 1849-amino-acid polypeptide reads, in one-letter code: NADH-ubiquinone oxidoreductase chain 5 (1849 aa).

41 helical membrane passes run 76-93 (YLLL…TVCY), 98-120 (LILL…YLQY), 190-212 (YWLC…IIGW), 222-244 (LVPT…IYLY), 279-301 (HLLT…ILSS), 316-338 (LALQ…ILCY), 358-380 (LEII…ILSV), 390-412 (VIIL…TILI), 419-441 (IAVY…IWLL), 483-505 (LLDA…CLGV), 510-532 (LFIA…LQVV), 536-558 (ISYI…VYSI), 565-587 (LIMY…IHTI), 621-640 (IWLI…STLV), 683-705 (WVRF…YVQF), 718-740 (LTRI…QGIL), 745-767 (IISY…LTIL), 797-819 (PTWV…LVTV), 868-890 (ILLL…LLSL), 905-927 (LTVQ…YIVL), 966-988 (LYSY…SLLE), 1008-1030 (PDLL…ELLL), 1073-1095 (LTVV…QILF), 1105-1127 (LATI…LSYL), 1172-1194 (TYLL…IYII), 1219-1241 (VYFL…FFYH), 1248-1270 (GIFY…TLYY), 1296-1318 (IITF…AIIL), 1330-1352 (FAYN…IVSY), 1357-1379 (MIIF…YARI), 1418-1440 (LFAL…FDFT), 1444-1466 (VIVF…FVWL), 1478-1500 (ALIH…APIL), 1504-1526 (VYTL…ILAT), 1533-1555 (KAVA…FLAF), 1559-1581 (LIYL…YIVH), 1602-1624 (IAIY…GFFA), 1639-1661 (VATF…LYRI), 1719-1741 (LLHL…LVTG), 1773-1795 (VRNI…TAIN), and 1802-1824 (IIYL…HYFL).

The protein belongs to the complex I subunit 5 family.

Its subcellular location is the hydrogenosome membrane. The catalysed reaction is a ubiquinone + NADH + 5 H(+)(in) = a ubiquinol + NAD(+) + 4 H(+)(out). This Nyctotherus ovalis protein is NADH-ubiquinone oxidoreductase chain 5 (nad5).